The sequence spans 372 residues: B2 bradykinin receptor (372 aa).

The Extracellular segment spans residues 1–34 (MFNITSQVSALNATLAQGNSCLDAEWWSWLNTIQ). 2 N-linked (GlcNAc...) asparagine glycosylation sites follow: asparagine 3 and asparagine 12. The helical transmembrane segment at 35 to 58 (APFLWVLFVLAVLENIFVLSVFFL) threads the bilayer. Over 59-67 (HKSSCTVAE) the chain is Cytoplasmic. A helical membrane pass occupies residues 68 to 92 (IYLGNLAVADLILAFGLPFWAITIA). The Extracellular portion of the chain corresponds to 93–105 (NNFDWLFGEVLCR). A disulfide bridge connects residues cysteine 104 and cysteine 185. The helical transmembrane segment at 106-127 (MVNTMIQMNMYSSICFLMLVSI) threads the bilayer. At 128-149 (DRYLALVKTMSMGRMRGVRWAK) the chain is on the cytoplasmic side. Tyrosine 130 is subject to Phosphotyrosine. A helical membrane pass occupies residues 150 to 172 (LYSLVIWGCALLLSSPMLVFRTM). The Extracellular portion of the chain corresponds to 173-195 (KDYRDEGHNVTACLIIYPSLTWQ). The N-linked (GlcNAc...) asparagine glycan is linked to asparagine 181. Residues 196–222 (VFTNVLLNLVGFLLPLSIITFCTVQIM) form a helical membrane-spanning segment. Over 223 to 241 (QVLRNNEMQKFKEIQTERR) the chain is Cytoplasmic. The chain crosses the membrane as a helical span at residues 242-266 (ATVLVLAVLLLFVVCWLPFQIGTFL). Residues 267-284 (DTLRLLGFLPGCWEHVID) lie on the Extracellular side of the membrane. A helical transmembrane segment spans residues 285–308 (LITQISSYLAYSNSCLNPLVYVIV). At 309 to 364 (GKRFRKKSREVYHGLCRSGGCVSEPAQSENSMGTLRTSISVDRQIHKLQDWARSSS) the chain is on the cytoplasmic side. Tyrosine 320 carries the post-translational modification Phosphotyrosine. The S-palmitoyl cysteine moiety is linked to residue cysteine 324. Serine 339 carries the post-translational modification Phosphoserine. Position 342 is a phosphothreonine (threonine 342). Phosphoserine; by GRK6 occurs at positions 346 and 348.

The protein belongs to the G-protein coupled receptor 1 family. Bradykinin receptor subfamily. BDKRB2 sub-subfamily. Forms a complex with PECAM1 and GNAQ. Interacts with PECAM1.

Its subcellular location is the cell membrane. Receptor for bradykinin. It is associated with G proteins that activate a phosphatidylinositol-calcium second messenger system. This Cavia porcellus (Guinea pig) protein is B2 bradykinin receptor (BDKRB2).